The primary structure comprises 259 residues: TCF3 fusion partner homolog (259 aa).

Disordered regions lie at residues 51 to 72 (GLGDSGLRERDEEEEAARGRRR) and 141 to 210 (EDDG…APVQ). Residue Ser-167 is modified to Phosphoserine. Phosphothreonine is present on Thr-172. Phosphoserine is present on residues Ser-180 and Ser-188. Thr-203 is modified (phosphothreonine). Lys-222 participates in a covalent cross-link: Glycyl lysine isopeptide (Lys-Gly) (interchain with G-Cter in SUMO2). A disordered region spans residues 240–259 (VSRGPDKLLPYPTLASPPFD). Position 255 is a phosphoserine (Ser-255).

In terms of assembly, interacts with NOL3; translocates NOL3 into the nucleus and negatively regulated TFPT-induced cell death. Component of the chromatin remodeling INO80 complex; specifically part of a complex module associated with the N-terminus of INO80. As to expression, ubiquitously expressed. Abundant in the brain.

Its subcellular location is the nucleus. In terms of biological role, appears to promote apoptosis in a p53/TP53-independent manner. Functionally, putative regulatory component of the chromatin remodeling INO80 complex which is involved in transcriptional regulation, DNA replication and probably DNA repair. This is TCF3 fusion partner homolog (Tfpt) from Rattus norvegicus (Rat).